The sequence spans 832 residues: Subtilisin-like protease SBT2.1 (832 aa).

A signal peptide spans Met1–Ala24. A propeptide spans Glu25–Ala138 (activation peptide). N-linked (GlcNAc...) asparagine glycosylation is found at Asn29 and Asn73. The region spanning Val36–Glu136 is the Inhibitor I9 domain. The 540-residue stretch at Phe145 to Leu684 folds into the Peptidase S8 domain. Asp172 serves as the catalytic Charge relay system. Asn233 carries N-linked (GlcNAc...) asparagine glycosylation. His247 serves as the catalytic Charge relay system. Residues Asn272, Asn315, Asn390, Asn417, Asn470, Asn515, and Asn522 are each glycosylated (N-linked (GlcNAc...) asparagine). The PA domain maps to Leu408–Ser503. Residue Ser609 is the Charge relay system of the active site. Residues Asn679, Asn705, Asn713, Asn723, Asn760, and Asn801 are each glycosylated (N-linked (GlcNAc...) asparagine).

It belongs to the peptidase S8 family.

Its subcellular location is the secreted. The polypeptide is Subtilisin-like protease SBT2.1 (Arabidopsis thaliana (Mouse-ear cress)).